The primary structure comprises 417 residues: Tryptophan synthase beta chain (417 aa).

An N6-(pyridoxal phosphate)lysine modification is found at Lys110.

This sequence belongs to the TrpB family. Tetramer of two alpha and two beta chains. It depends on pyridoxal 5'-phosphate as a cofactor.

It catalyses the reaction (1S,2R)-1-C-(indol-3-yl)glycerol 3-phosphate + L-serine = D-glyceraldehyde 3-phosphate + L-tryptophan + H2O. The protein operates within amino-acid biosynthesis; L-tryptophan biosynthesis; L-tryptophan from chorismate: step 5/5. Its function is as follows. The beta subunit is responsible for the synthesis of L-tryptophan from indole and L-serine. The polypeptide is Tryptophan synthase beta chain (Prochlorococcus marinus (strain NATL1A)).